Reading from the N-terminus, the 425-residue chain is Serine--tRNA ligase (425 aa).

233–235 (TAE) contributes to the L-serine binding site. 264–266 (RAE) contacts ATP. Glu-287 is a binding site for L-serine. Position 351–354 (351–354 (EISS)) interacts with ATP. Ser-387 provides a ligand contact to L-serine.

It belongs to the class-II aminoacyl-tRNA synthetase family. Type-1 seryl-tRNA synthetase subfamily. Homodimer. The tRNA molecule binds across the dimer.

The protein localises to the cytoplasm. The catalysed reaction is tRNA(Ser) + L-serine + ATP = L-seryl-tRNA(Ser) + AMP + diphosphate + H(+). The enzyme catalyses tRNA(Sec) + L-serine + ATP = L-seryl-tRNA(Sec) + AMP + diphosphate + H(+). The protein operates within aminoacyl-tRNA biosynthesis; selenocysteinyl-tRNA(Sec) biosynthesis; L-seryl-tRNA(Sec) from L-serine and tRNA(Sec): step 1/1. Catalyzes the attachment of serine to tRNA(Ser). Is also able to aminoacylate tRNA(Sec) with serine, to form the misacylated tRNA L-seryl-tRNA(Sec), which will be further converted into selenocysteinyl-tRNA(Sec). In Clostridium perfringens (strain 13 / Type A), this protein is Serine--tRNA ligase.